The chain runs to 268 residues: Tubulin-specific chaperone C (268 aa).

The 158-residue stretch at 98–255 folds into the C-CAP/cofactor C-like domain; it reads PAYTTTLKKH…SAFAFEDFDI (158 aa).

It localises to the cytoplasm. The protein resides in the cytoskeleton. Tubulin-folding protein; involved in the early step of the tubulin folding pathway. This chain is Tubulin-specific chaperone C (CIN2), found in Saccharomyces cerevisiae (strain ATCC 204508 / S288c) (Baker's yeast).